Reading from the N-terminus, the 132-residue chain is Small ribosomal subunit protein uS8 (132 aa).

This sequence belongs to the universal ribosomal protein uS8 family. In terms of assembly, part of the 30S ribosomal subunit. Contacts proteins S5 and S12.

In terms of biological role, one of the primary rRNA binding proteins, it binds directly to 16S rRNA central domain where it helps coordinate assembly of the platform of the 30S subunit. In Treponema pallidum (strain Nichols), this protein is Small ribosomal subunit protein uS8.